Consider the following 231-residue polypeptide: N-acetylmuramate alpha-1-phosphate uridylyltransferase (231 aa).

Residues 11–13 (GER) and Lys-23 contribute to the UTP site. Asn-106 provides a ligand contact to substrate. Asp-108 is a Mg(2+) binding site. Substrate contacts are provided by Asp-146 and Asp-213. Asp-213 provides a ligand contact to Mg(2+).

The protein belongs to the nucleotidyltransferase MurU family. As to quaternary structure, monomer. It depends on Mg(2+) as a cofactor.

It carries out the reaction N-acetyl-alpha-D-muramate 1-phosphate + UDP + H(+) = UDP-N-acetyl-alpha-D-muramate + phosphate. It functions in the pathway cell wall biogenesis; peptidoglycan recycling. Catalyzes the formation of UDP-N-acetylmuramate (UDP-MurNAc), a crucial precursor of the bacterial peptidoglycan cell wall, from UTP and MurNAc-alpha-1P. Is likely involved in peptidoglycan recycling as part of a cell wall recycling pathway that bypasses de novo biosynthesis of the peptidoglycan precursor UDP-MurNAc. Is able to complement the fosfomycin sensitivity phenotype of a P.putida mutant lacking murU. This is N-acetylmuramate alpha-1-phosphate uridylyltransferase from Neisseria meningitidis serogroup B (strain ATCC BAA-335 / MC58).